A 670-amino-acid chain; its full sequence is Acetyl-coenzyme A synthetase (670 aa).

CoA-binding positions include 211-214 and Thr-329; that span reads RGGK. ATP-binding positions include 404–406, 428–433, Asp-519, and Arg-534; these read GEP and DTYWQT. Ser-542 contacts CoA. ATP is bound at residue Arg-545. Position 603 (Arg-603) interacts with CoA.

Belongs to the ATP-dependent AMP-binding enzyme family.

It catalyses the reaction acetate + ATP + CoA = acetyl-CoA + AMP + diphosphate. This chain is Acetyl-coenzyme A synthetase (facA), found in Emericella nidulans (strain FGSC A4 / ATCC 38163 / CBS 112.46 / NRRL 194 / M139) (Aspergillus nidulans).